A 517-amino-acid polypeptide reads, in one-letter code: T-box transcription factor TBX22 (517 aa).

Residues 1–83 form a disordered region; it reads MALSSRAHAF…SDESNSQESL (83 aa). Residues 35-45 are compositionally biased toward acidic residues; sequence LQEEQFVEEGE. Residues 46–66 are compositionally biased toward basic and acidic residues; sequence EILRSPSRDSQQPEKRLKAES. Positions 74 to 83 are enriched in low complexity; the sequence is SDESNSQESL. A DNA-binding region (T-box) is located at residues 93–280; it reads LQGSDLWKRF…RNPFAKGFRD (188 aa). The disordered stretch occupies residues 312-333; it reads TQSGSSGSSPVTSSGGAPSPLN. Residues 314 to 333 are compositionally biased toward low complexity; it reads SGSSGSSPVTSSGGAPSPLN.

The protein resides in the nucleus. In terms of biological role, probable transcriptional regulator involved in developmental processes. This is major determinant crucial to palatogenesis. The chain is T-box transcription factor TBX22 (Tbx22) from Mus musculus (Mouse).